Reading from the N-terminus, the 653-residue chain is Golgi integral membrane protein 4 (653 aa).

A lipid anchor (N-myristoyl glycine) is attached at glycine 2. Residues 2–12 (GNGMCSRKQKR) are Cytoplasmic-facing. Residues 13–33 (IFQTLLLLTVVFGFLYGAMLY) traverse the membrane as a helical; Signal-anchor for type II membrane protein segment. Over 34-653 (LELQTQLRKA…AEKSHRRAEM (620 aa)) the chain is Lumenal. The golgi targeting stretch occupies residues 38 to 107 (TQLRKAEAVA…ETLNKGRQDS (70 aa)). Positions 66-216 (EHRSRLEKSL…KQLKDTLNRI (151 aa)) form a coiled coil. The tract at residues 80-175 (LEHKKAKEDF…QELSKLKETV (96 aa)) is endosome targeting. The interval 122–143 (KSQHEELRKQHSDLEEEHRKQG) is disordered. Basic and acidic residues predominate over residues 123–143 (SQHEELRKQHSDLEEEHRKQG). Positions 176-220 (YNLREENRQLRKAHQDIHTQLQDVKTQVAEYKQLKDTLNRIPSFR) are golgi targeting. N-linked (GlcNAc...) asparagine glycosylation occurs at asparagine 229. Residues 253–653 (QEGQQNHDAM…AEKSHRRAEM (401 aa)) are disordered. 5 stretches are compositionally biased toward basic and acidic residues: residues 261–270 (AMPRRMEEKP), 290–307 (EPRE…RKAL), 319–328 (EHLEEEHDPS), 348–360 (LDGR…EHST), and 381–398 (ARRD…EALH). Serine 328 carries the post-translational modification Phosphoserine. Over residues 399-423 (QQRLHGQLLRQQQQQQYLAREMAQQ) the composition is skewed to low complexity. 2 stretches are compositionally biased toward basic and acidic residues: residues 466 to 505 (AYDR…DRAA) and 527 to 545 (EQVR…KQSE). Serine 538 is modified (phosphoserine). Residues 565 to 587 (QQEDNVDEQYQEEGEEEVQEDLT) show a composition bias toward acidic residues. Phosphotyrosine is present on tyrosine 574. Position 587 is a phosphothreonine (threonine 587). Over residues 588 to 599 (EEKKRELEHNAE) the composition is skewed to basic and acidic residues. At tyrosine 631 the chain carries Phosphotyrosine. The span at 631–640 (YEEEEDEEDG) shows a compositional bias: acidic residues.

Belongs to the GOLIM4 family. Post-translationally, phosphorylated by c-AMP-dependent kinases most probably in its lumenal part. O-glycosylated; modified by sialic acid residues. In terms of processing, N-glycosylated; N-glycans are of the complex type and modified by sialic acid residues. Expressed in liver, pancreas and pituitary (at protein level).

It is found in the golgi apparatus. Its subcellular location is the golgi stack membrane. The protein resides in the endosome membrane. The protein localises to the membrane. In terms of biological role, plays a role in endosome to Golgi protein trafficking; mediates protein transport along the late endosome-bypass pathway from the early endosome to the Golgi. The protein is Golgi integral membrane protein 4 (Golim4) of Rattus norvegicus (Rat).